Here is a 324-residue protein sequence, read N- to C-terminus: tRNA U34 carboxymethyltransferase (324 aa).

Residues Lys92, Trp106, Lys111, Gly131, 181–182, Met197, Tyr201, and Arg316 contribute to the carboxy-S-adenosyl-L-methionine site; that span reads LE.

The protein belongs to the class I-like SAM-binding methyltransferase superfamily. CmoB family. As to quaternary structure, homotetramer.

It carries out the reaction carboxy-S-adenosyl-L-methionine + 5-hydroxyuridine(34) in tRNA = 5-carboxymethoxyuridine(34) in tRNA + S-adenosyl-L-homocysteine + H(+). Catalyzes carboxymethyl transfer from carboxy-S-adenosyl-L-methionine (Cx-SAM) to 5-hydroxyuridine (ho5U) to form 5-carboxymethoxyuridine (cmo5U) at position 34 in tRNAs. The sequence is that of tRNA U34 carboxymethyltransferase from Syntrophotalea carbinolica (strain DSM 2380 / NBRC 103641 / GraBd1) (Pelobacter carbinolicus).